The primary structure comprises 292 residues: Cytidine deaminase (292 aa).

2 consecutive CMP/dCMP-type deaminase domains span residues 47–167 and 186–292; these read TPLK…FGPK and DHQD…YYSL. Residue 88–90 participates in substrate binding; the sequence is NQE. His101 contributes to the Zn(2+) binding site. The active-site Proton donor is the Glu103. Residues Cys128 and Cys131 each coordinate Zn(2+).

The protein belongs to the cytidine and deoxycytidylate deaminase family. In terms of assembly, homodimer. The cofactor is Zn(2+).

It carries out the reaction cytidine + H2O + H(+) = uridine + NH4(+). The enzyme catalyses 2'-deoxycytidine + H2O + H(+) = 2'-deoxyuridine + NH4(+). This enzyme scavenges exogenous and endogenous cytidine and 2'-deoxycytidine for UMP synthesis. The polypeptide is Cytidine deaminase (Haemophilus influenzae (strain PittEE)).